Reading from the N-terminus, the 60-residue chain is Large ribosomal subunit protein uL30 (60 aa).

It belongs to the universal ribosomal protein uL30 family. In terms of assembly, part of the 50S ribosomal subunit.

The chain is Large ribosomal subunit protein uL30 from Desulfitobacterium hafniense (strain DSM 10664 / DCB-2).